We begin with the raw amino-acid sequence, 231 residues long: Flagellar L-ring protein (231 aa).

Positions 1 to 18 (MNRLMIVSLLGIATALGG) are cleaved as a signal peptide. Residue Cys19 is the site of N-palmitoyl cysteine attachment. Cys19 carries the S-diacylglycerol cysteine lipid modification. The interval 118 to 141 (LSLSAEYGGSRDAKGDSQAGQSNS) is disordered.

It belongs to the FlgH family. In terms of assembly, the basal body constitutes a major portion of the flagellar organelle and consists of four rings (L,P,S, and M) mounted on a central rod.

The protein resides in the cell outer membrane. It is found in the bacterial flagellum basal body. In terms of biological role, assembles around the rod to form the L-ring and probably protects the motor/basal body from shearing forces during rotation. This is Flagellar L-ring protein from Pseudomonas aeruginosa (strain LESB58).